The sequence spans 369 residues: Chorismate synthase (369 aa).

2 residues coordinate NADP(+): Arg48 and Arg54. Residues 125 to 127 (RSS), 238 to 239 (NA), Gly278, 293 to 297 (KPTSS), and Arg319 contribute to the FMN site.

It belongs to the chorismate synthase family. In terms of assembly, homotetramer. FMNH2 is required as a cofactor.

The catalysed reaction is 5-O-(1-carboxyvinyl)-3-phosphoshikimate = chorismate + phosphate. It functions in the pathway metabolic intermediate biosynthesis; chorismate biosynthesis; chorismate from D-erythrose 4-phosphate and phosphoenolpyruvate: step 7/7. In terms of biological role, catalyzes the anti-1,4-elimination of the C-3 phosphate and the C-6 proR hydrogen from 5-enolpyruvylshikimate-3-phosphate (EPSP) to yield chorismate, which is the branch point compound that serves as the starting substrate for the three terminal pathways of aromatic amino acid biosynthesis. This reaction introduces a second double bond into the aromatic ring system. The protein is Chorismate synthase of Burkholderia pseudomallei (strain 1106a).